A 375-amino-acid polypeptide reads, in one-letter code: MQCALYDAGRCRSCQWITQSVNEQLSAKTADLHRLLAGLPVEQWCSPIGGPEQHFRNKAKMVVSGSVEKPLFGMLHRDGTPVDLCGCPLYPASFAPVFSALKPFIARAGLTPYNVARKRGELKYLLLTESQFDGGMMLRFVLRSETKLTQLRAALPWLRAQLPQLRVITANIQPVHMAIMEGETEIYLTDQQALAERFNDVPLWIRPQSFFQTNPTVASRLYATARDWVGQLPVRHMWDLFCGVGGFGLHCATPQMQLTGIEIAPEAIACAKQSAAELGLTRLHFQALDSTQFATAQGETPDLVLVNPPRRGIGKPLCDYLAQMAPRFIIYSSCNAQTMAQDIRHLPNYRIQRVQLFDMFPHTAHYEVLTLLCRL.

Cys3, Cys11, Cys14, and Cys87 together coordinate [4Fe-4S] cluster. S-adenosyl-L-methionine is bound by residues Gln212, Phe241, Glu262, and Asn307. Cys334 serves as the catalytic Nucleophile.

This sequence belongs to the class I-like SAM-binding methyltransferase superfamily. RNA M5U methyltransferase family. RlmC subfamily.

The enzyme catalyses uridine(747) in 23S rRNA + S-adenosyl-L-methionine = 5-methyluridine(747) in 23S rRNA + S-adenosyl-L-homocysteine + H(+). Catalyzes the formation of 5-methyl-uridine at position 747 (m5U747) in 23S rRNA. The polypeptide is 23S rRNA (uracil(747)-C(5))-methyltransferase RlmC (Salmonella dublin (strain CT_02021853)).